The following is a 117-amino-acid chain: uncharacterized protein (117 aa).

Positions 16-56 are disordered; sequence FSQSSDGRSNGGGSSSGDSVSTTSDGLLTTGTSPNTSSTSL. The segment covering 31–56 has biased composition (low complexity); the sequence is SGDSVSTTSDGLLTTGTSPNTSSTSL.

This is an uncharacterized protein from Saccharomyces cerevisiae (strain ATCC 204508 / S288c) (Baker's yeast).